The following is a 522-amino-acid chain: Probable cytosolic Fe-S cluster assembly factor narfl (522 aa).

Residues cysteine 26, cysteine 73, cysteine 76, cysteine 79, cysteine 205, cysteine 281, cysteine 439, and cysteine 443 each coordinate [4Fe-4S] cluster.

It belongs to the NARF family.

In terms of biological role, component of the cytosolic iron-sulfur (Fe/S) protein assembly machinery. Required for maturation of extramitochondrial Fe/S proteins. The polypeptide is Probable cytosolic Fe-S cluster assembly factor narfl (narfl) (Dictyostelium discoideum (Social amoeba)).